The primary structure comprises 249 residues: Type III pantothenate kinase (249 aa).

Asp6 to Lys13 serves as a coordination point for ATP. Substrate-binding positions include Tyr89 and Gly96–Arg99. The active-site Proton acceptor is Asp98. Asp119 provides a ligand contact to K(+). ATP is bound at residue Thr122. Residue Thr174 participates in substrate binding.

Belongs to the type III pantothenate kinase family. Homodimer. Requires NH4(+) as cofactor. The cofactor is K(+).

Its subcellular location is the cytoplasm. It carries out the reaction (R)-pantothenate + ATP = (R)-4'-phosphopantothenate + ADP + H(+). Its pathway is cofactor biosynthesis; coenzyme A biosynthesis; CoA from (R)-pantothenate: step 1/5. Functionally, catalyzes the phosphorylation of pantothenate (Pan), the first step in CoA biosynthesis. The polypeptide is Type III pantothenate kinase (Colwellia psychrerythraea (strain 34H / ATCC BAA-681) (Vibrio psychroerythus)).